Reading from the N-terminus, the 205-residue chain is Isochorismatase domain-containing protein 2 (205 aa).

Residues Ser7 and Ser202 each carry the phosphoserine modification.

This sequence belongs to the isochorismatase family. As to quaternary structure, interacts with CDKN2A.

The protein localises to the cytoplasm. The protein resides in the nucleus. In Pongo abelii (Sumatran orangutan), this protein is Isochorismatase domain-containing protein 2 (ISOC2).